A 644-amino-acid polypeptide reads, in one-letter code: Translation factor GUF1, mitochondrial (644 aa).

A mitochondrion-targeting transit peptide spans 1–14 (MLRKAFRYLVPVRC). Residues 46-227 (ERYRNFSIVA…AIVDRIPPPT (182 aa)) form the tr-type G domain. Residues 55–62 (AHVDHGKS), 120–124 (DTPGH), and 174–177 (NKID) contribute to the GTP site.

The protein belongs to the TRAFAC class translation factor GTPase superfamily. Classic translation factor GTPase family. LepA subfamily.

Its subcellular location is the mitochondrion inner membrane. It catalyses the reaction GTP + H2O = GDP + phosphate + H(+). Functionally, promotes mitochondrial protein synthesis. May act as a fidelity factor of the translation reaction, by catalyzing a one-codon backward translocation of tRNAs on improperly translocated ribosomes. Binds to mitochondrial ribosomes in a GTP-dependent manner. The sequence is that of Translation factor GUF1, mitochondrial from Eremothecium gossypii (strain ATCC 10895 / CBS 109.51 / FGSC 9923 / NRRL Y-1056) (Yeast).